The chain runs to 261 residues: N-acetyltransferase ECO1 (261 aa).

The CCHH-type zinc-finger motif lies at 29–53 (LKCPKCEMKYSPNSIDDVATHKKYH). An N-acetyltransferase domain is found at 102 to 261 (VMIQENKPAE…SGHILIPCYL (160 aa)).

It belongs to the acetyltransferase family. ECO subfamily.

The protein localises to the nucleus. Functionally, probable acetyltransferase required for the establishment of sister chromatid cohesion and couple the processes of cohesion and DNA replication to ensure that only sister chromatids become paired together. In contrast to the structural cohesins, the deposition and establishment factors are required only during S phase. Acts by acetylating the cohesin complex component SMC3. The polypeptide is N-acetyltransferase ECO1 (ECO1) (Candida glabrata (strain ATCC 2001 / BCRC 20586 / JCM 3761 / NBRC 0622 / NRRL Y-65 / CBS 138) (Yeast)).